A 710-amino-acid chain; its full sequence is Protein CNGC15a (710 aa).

Helical transmembrane passes span 85-105, 115-135, 174-194, 207-226, 248-268, and 368-388; these read IFLAACLISLFVDPLFFYLPV, SIGLEVSLTIIRTFVDAFYII, LWSDLVAALPLPQVLIWAVIP, VVRLVSIFQYLLRLYLIYPL, YLTLYMLASHVLGSTWYLLSI, and AEINFAVIVAILGLVLFALLI. 474 to 559 provides a ligand contact to a nucleoside 3',5'-cyclic phosphate; sequence LFDQMDDRML…WALDPRPTAV (86 aa).

This sequence belongs to the cyclic nucleotide-gated cation channel (TC 1.A.1.5) family. Interacts (via N-terminus) with DMI1 (via c-terminus). The Nod factor has no effect on this interaction, implying that the complex is maintained after activation. Expressed in roots, stems, leaves, flowers and pods.

It is found in the nucleus membrane. Its function is as follows. Cyclic nucleotide-gated channel involved in the establishment of both rhizobial and mycorrhizal associations. Required for full activation of nuclear-localized Ca(2+) oscillations by Nod and Myc factors. Simultaneous activation of the K(+)-permeable channel DMI1 and the Ca(2+) channel CNGC15 can give rise to sustained Ca(2+) oscillations. May function during fertilization in both female and male gametophytic Ca(2+) signaling. This chain is Protein CNGC15a, found in Medicago truncatula (Barrel medic).